We begin with the raw amino-acid sequence, 290 residues long: Arylamine N-acetyltransferase 2 (290 aa).

Residue Cys-68 is the Acyl-thioester intermediate of the active site. CoA-binding residues include Thr-103 and Gly-104. Residue 106–107 (VH) coordinates substrate. Catalysis depends on residues His-107 and Asp-122. Positions 208, 214, and 287 each coordinate CoA.

It belongs to the arylamine N-acetyltransferase family.

The protein resides in the cytoplasm. The enzyme catalyses an arylamine + acetyl-CoA = an N-acetylarylamine + CoA. It carries out the reaction an N-hydroxyarylamine + acetyl-CoA = an N-acetoxyarylamine + CoA. Catalyzes the N- or O-acetylation of various arylamine and heterocyclic amine substrates. Participates in the detoxification of a plethora of hydrazine and arylamine drugs, and is able to bioactivate several known carcinogens. In Homo sapiens (Human), this protein is Arylamine N-acetyltransferase 2 (NAT2).